The primary structure comprises 63 residues: MGMRMMFTVFLLVVLATTVVSFTSYRASDGRNAAAKASDLIALTVRDCCSRPPCRWSHPELCS.

Residues 1–21 form the signal peptide; sequence MGMRMMFTVFLLVVLATTVVS. A propeptide spanning residues 22–46 is cleaved from the precursor; sequence FTSYRASDGRNAAAKASDLIALTVR. The tract at residues 50–52 is ser-Xaa-Pro motif, crucial for potent interaction with nAChR; it reads SRP.

It belongs to the conotoxin A superfamily. Is not hydroxylated. Post-translationally, contains 2 disulfide bonds. As to expression, expressed by the venom duct.

It is found in the secreted. Functionally, alpha-conotoxins act on postsynaptic membranes, they bind to the nicotinic acetylcholine receptors (nAChR) and thus inhibit them. The protein is Alpha-conotoxin-like Am1.6 of Conus amadis (Amadis cone).